A 193-amino-acid polypeptide reads, in one-letter code: MQITISEAAQAHFRRLLDQQEEGTNIRIFVVNPGSPNAECGVSYCPKNAVETTDHEIKYSEFSAFIDEVSFPFLEDAEIDYITEEMGSQLTLKAPNAKMRKVADDAPLIERVEYAIQTQINPQLAGHGGHITLIEITKDGKAILQFGGGCNGCSMVDVTLKDGIEKQLLAMFADELTGVKDVTEHQRGEHSYY.

[4Fe-4S] cluster-binding residues include C150 and C153.

Belongs to the NfuA family. As to quaternary structure, homodimer. Requires [4Fe-4S] cluster as cofactor.

Involved in iron-sulfur cluster biogenesis. Binds a 4Fe-4S cluster, can transfer this cluster to apoproteins, and thereby intervenes in the maturation of Fe/S proteins. Could also act as a scaffold/chaperone for damaged Fe/S proteins. This chain is Fe/S biogenesis protein NfuA, found in Histophilus somni (strain 129Pt) (Haemophilus somnus).